The sequence spans 176 residues: Protein MAL2 (176 aa).

The Cytoplasmic segment spans residues 1–34; the sequence is MSAGGASVPPPPNPAVSFPVPRVTLPAGPDILRT. Residues 31 to 175 enclose the MARVEL domain; it reads ILRTYSGAFV…SLGLALRRWR (145 aa). Residues 35-55 traverse the membrane as a helical segment; sequence YSGAFVCLEILFGGLVWILVA. Topologically, residues 56 to 66 are lumenal; the sequence is SSNVPLPLLQG. Residues 67-87 form a helical membrane-spanning segment; that stretch reads WVMFVSVTAFFFSLLFLGLFL. Over 88-102 the chain is Cytoplasmic; sequence SGMVTQIDANWNFLD. A helical transmembrane segment spans residues 103–123; that stretch reads FAYHFTVFVFYFGAFLLEAAA. Over 124-149 the chain is Lumenal; that stretch reads TSLHDLHYNITMTGQPLLNDNQYNIN. Asn132 carries N-linked (GlcNAc...) asparagine glycosylation. The chain crosses the membrane as a helical span at residues 150 to 170; it reads VAASIFAFMTTACYGCSLGLA. Residues 171–176 lie on the Cytoplasmic side of the membrane; that stretch reads LRRWRP.

This sequence belongs to the MAL family. In terms of assembly, interacts with TPD52L2.

Its subcellular location is the cell membrane. The protein localises to the apical cell membrane. In terms of biological role, member of the machinery of polarized transport. Required for the indirect transcytotic route at the step of the egress of the transcytosing cargo from perinuclear endosomes in order for it to travel to the apical surface via a raft-dependent pathway. This is Protein MAL2 (MAL2) from Pongo abelii (Sumatran orangutan).